The primary structure comprises 53 residues: U1-poneritoxin-Dq5a (53 aa).

A signal peptide spans 1–23 (MNIRLMFTLIALLVLTVSFSGAN). Cystine bridges form between C25–C42, C32–C47, and C41–C52.

Expressed by the venom gland.

It is found in the secreted. Its function is as follows. May have neurotoxic activity. The sequence is that of U1-poneritoxin-Dq5a from Dinoponera quadriceps (South American ant).